A 334-amino-acid chain; its full sequence is Fructose-1,6-bisphosphatase class 1 (334 aa).

Positions 87, 106, 108, and 109 each coordinate Mg(2+). Residues 109–112, N208, and K274 contribute to the substrate site; that span reads DGSS. Position 280 (E280) interacts with Mg(2+).

It belongs to the FBPase class 1 family. As to quaternary structure, homotetramer. It depends on Mg(2+) as a cofactor.

The protein resides in the cytoplasm. It catalyses the reaction beta-D-fructose 1,6-bisphosphate + H2O = beta-D-fructose 6-phosphate + phosphate. The protein operates within carbohydrate biosynthesis; gluconeogenesis. In Psychrobacter sp. (strain PRwf-1), this protein is Fructose-1,6-bisphosphatase class 1.